Reading from the N-terminus, the 486-residue chain is Cysteine--tRNA ligase (486 aa).

C30 is a binding site for Zn(2+). The 'HIGH' region motif lies at 32 to 42 (PTVYDRAHLGN). Residues C221, H246, and E250 each contribute to the Zn(2+) site. Positions 279–283 (KMSKS) match the 'KMSKS' region motif. K282 provides a ligand contact to ATP.

Belongs to the class-I aminoacyl-tRNA synthetase family. As to quaternary structure, monomer. Requires Zn(2+) as cofactor.

The protein localises to the cytoplasm. The enzyme catalyses tRNA(Cys) + L-cysteine + ATP = L-cysteinyl-tRNA(Cys) + AMP + diphosphate. This is Cysteine--tRNA ligase from Cereibacter sphaeroides (strain ATCC 17025 / ATH 2.4.3) (Rhodobacter sphaeroides).